Consider the following 320-residue polypeptide: Malate dehydrogenase (320 aa).

NAD(+) is bound by residues 10 to 15 (GSGMIG) and aspartate 34. The substrate site is built by arginine 83 and arginine 89. NAD(+) is bound by residues asparagine 96 and 119 to 121 (ITN). Asparagine 121 and arginine 152 together coordinate substrate. Histidine 176 (proton acceptor) is an active-site residue.

The protein belongs to the LDH/MDH superfamily. MDH type 3 family.

The enzyme catalyses (S)-malate + NAD(+) = oxaloacetate + NADH + H(+). In terms of biological role, catalyzes the reversible oxidation of malate to oxaloacetate. The sequence is that of Malate dehydrogenase from Brucella melitensis biotype 1 (strain ATCC 23456 / CCUG 17765 / NCTC 10094 / 16M).